Reading from the N-terminus, the 154-residue chain is Xanthine-guanine phosphoribosyltransferase (154 aa).

Residues 37–38 (RG), R69, and 88–96 (EDLVDSGDT) each bind 5-phospho-alpha-D-ribose 1-diphosphate. R69 is a binding site for GMP. D89 is a Mg(2+) binding site. D92 and I135 together coordinate guanine. Xanthine contacts are provided by D92 and I135. Residues 92-96 (DSGDT) and 134-135 (WI) each bind GMP.

This sequence belongs to the purine/pyrimidine phosphoribosyltransferase family. XGPT subfamily. In terms of assembly, homotetramer. Requires Mg(2+) as cofactor.

The protein localises to the cell inner membrane. It carries out the reaction GMP + diphosphate = guanine + 5-phospho-alpha-D-ribose 1-diphosphate. It catalyses the reaction XMP + diphosphate = xanthine + 5-phospho-alpha-D-ribose 1-diphosphate. The enzyme catalyses IMP + diphosphate = hypoxanthine + 5-phospho-alpha-D-ribose 1-diphosphate. Its pathway is purine metabolism; GMP biosynthesis via salvage pathway; GMP from guanine: step 1/1. The protein operates within purine metabolism; XMP biosynthesis via salvage pathway; XMP from xanthine: step 1/1. Functionally, purine salvage pathway enzyme that catalyzes the transfer of the ribosyl-5-phosphate group from 5-phospho-alpha-D-ribose 1-diphosphate (PRPP) to the N9 position of the 6-oxopurines guanine and xanthine to form the corresponding ribonucleotides GMP (guanosine 5'-monophosphate) and XMP (xanthosine 5'-monophosphate), with the release of PPi. To a lesser extent, also acts on hypoxanthine. The protein is Xanthine-guanine phosphoribosyltransferase of Vibrio campbellii (strain ATCC BAA-1116).